A 151-amino-acid polypeptide reads, in one-letter code: Deoxyuridine 5'-triphosphate nucleotidohydrolase (151 aa).

Substrate contacts are provided by residues 69-71 (RSG), Asn82, 86-88 (LID), and Met96.

This sequence belongs to the dUTPase family. Mg(2+) serves as cofactor.

The enzyme catalyses dUTP + H2O = dUMP + diphosphate + H(+). It participates in pyrimidine metabolism; dUMP biosynthesis; dUMP from dCTP (dUTP route): step 2/2. Its function is as follows. This enzyme is involved in nucleotide metabolism: it produces dUMP, the immediate precursor of thymidine nucleotides and it decreases the intracellular concentration of dUTP so that uracil cannot be incorporated into DNA. This chain is Deoxyuridine 5'-triphosphate nucleotidohydrolase, found in Blochmanniella floridana.